The chain runs to 522 residues: Probable protein kinase UbiB (522 aa).

One can recognise a Protein kinase domain in the interval 119 to 497; that stretch reads SFERVPVASA…QRRTNRLLQS (379 aa). Residues 125–133 and K151 each bind ATP; that span reads VASASIAQV. Catalysis depends on D286, which acts as the Proton acceptor. A helical transmembrane segment spans residues 496–516; sequence QSIIYGGMGFVLGLLALQFLI.

This sequence belongs to the ABC1 family. UbiB subfamily.

The protein localises to the cell inner membrane. The protein operates within cofactor biosynthesis; ubiquinone biosynthesis [regulation]. Its function is as follows. Is probably a protein kinase regulator of UbiI activity which is involved in aerobic coenzyme Q (ubiquinone) biosynthesis. The polypeptide is Probable protein kinase UbiB (Paracidovorax citrulli (strain AAC00-1) (Acidovorax citrulli)).